The chain runs to 392 residues: Aminomethyltransferase, mitochondrial (392 aa).

The N-terminal 16 residues, Met-1–Ser-16, are a transit peptide targeting the mitochondrion. Residues Glu-221, Arg-250, and Tyr-388 each contribute to the substrate site.

Belongs to the GcvT family. In terms of assembly, the glycine cleavage system is composed of four proteins: P, T, L and H.

It is found in the mitochondrion. It carries out the reaction N(6)-[(R)-S(8)-aminomethyldihydrolipoyl]-L-lysyl-[protein] + (6S)-5,6,7,8-tetrahydrofolate = N(6)-[(R)-dihydrolipoyl]-L-lysyl-[protein] + (6R)-5,10-methylene-5,6,7,8-tetrahydrofolate + NH4(+). The glycine cleavage system catalyzes the degradation of glycine. This chain is Aminomethyltransferase, mitochondrial, found in Gallus gallus (Chicken).